The primary structure comprises 339 residues: D-erythrose-4-phosphate dehydrogenase (339 aa).

NAD(+) is bound at residue 11 to 12; sequence RI. Substrate-binding positions include 153–155, arginine 199, 212–213, and arginine 235; these read SCT and TK. Cysteine 154 acts as the Nucleophile in catalysis. Asparagine 317 lines the NAD(+) pocket.

Belongs to the glyceraldehyde-3-phosphate dehydrogenase family. Epd subfamily. Homotetramer.

The protein localises to the cytoplasm. It catalyses the reaction D-erythrose 4-phosphate + NAD(+) + H2O = 4-phospho-D-erythronate + NADH + 2 H(+). It participates in cofactor biosynthesis; pyridoxine 5'-phosphate biosynthesis; pyridoxine 5'-phosphate from D-erythrose 4-phosphate: step 1/5. Functionally, catalyzes the NAD-dependent conversion of D-erythrose 4-phosphate to 4-phosphoerythronate. The chain is D-erythrose-4-phosphate dehydrogenase from Shewanella halifaxensis (strain HAW-EB4).